The chain runs to 167 residues: Crossover junction endodeoxyribonuclease RuvC (167 aa).

Residues Asp7, Glu67, and Asp139 contribute to the active site. Mg(2+)-binding residues include Asp7, Glu67, and Asp139.

The protein belongs to the RuvC family. Homodimer which binds Holliday junction (HJ) DNA. The HJ becomes 2-fold symmetrical on binding to RuvC with unstacked arms; it has a different conformation from HJ DNA in complex with RuvA. In the full resolvosome a probable DNA-RuvA(4)-RuvB(12)-RuvC(2) complex forms which resolves the HJ. It depends on Mg(2+) as a cofactor.

Its subcellular location is the cytoplasm. The enzyme catalyses Endonucleolytic cleavage at a junction such as a reciprocal single-stranded crossover between two homologous DNA duplexes (Holliday junction).. In terms of biological role, the RuvA-RuvB-RuvC complex processes Holliday junction (HJ) DNA during genetic recombination and DNA repair. Endonuclease that resolves HJ intermediates. Cleaves cruciform DNA by making single-stranded nicks across the HJ at symmetrical positions within the homologous arms, yielding a 5'-phosphate and a 3'-hydroxyl group; requires a central core of homology in the junction. The consensus cleavage sequence is 5'-(A/T)TT(C/G)-3'. Cleavage occurs on the 3'-side of the TT dinucleotide at the point of strand exchange. HJ branch migration catalyzed by RuvA-RuvB allows RuvC to scan DNA until it finds its consensus sequence, where it cleaves and resolves the cruciform DNA. This is Crossover junction endodeoxyribonuclease RuvC from Akkermansia muciniphila (strain ATCC BAA-835 / DSM 22959 / JCM 33894 / BCRC 81048 / CCUG 64013 / CIP 107961 / Muc).